Reading from the N-terminus, the 31-residue chain is Cytochrome b6-f complex subunit 6 (31 aa).

Residues Ile-4 to Ala-24 form a helical membrane-spanning segment.

Belongs to the PetL family. The 4 large subunits of the cytochrome b6-f complex are cytochrome b6, subunit IV (17 kDa polypeptide, PetD), cytochrome f and the Rieske protein, while the 4 small subunits are PetG, PetL, PetM and PetN. The complex functions as a dimer.

It localises to the plastid. The protein resides in the chloroplast thylakoid membrane. In terms of biological role, component of the cytochrome b6-f complex, which mediates electron transfer between photosystem II (PSII) and photosystem I (PSI), cyclic electron flow around PSI, and state transitions. PetL is important for photoautotrophic growth as well as for electron transfer efficiency and stability of the cytochrome b6-f complex. The chain is Cytochrome b6-f complex subunit 6 from Chaetosphaeridium globosum (Charophycean green alga).